A 710-amino-acid chain; its full sequence is Elongation factor G (710 aa).

A tr-type G domain is found at 8–290 (SQYRNIGISA…AIVEYLPSPM (283 aa)). GTP-binding positions include 17 to 24 (AHIDAGKT), 88 to 92 (DTPGH), and 142 to 145 (NKMD).

It belongs to the TRAFAC class translation factor GTPase superfamily. Classic translation factor GTPase family. EF-G/EF-2 subfamily.

Its subcellular location is the cytoplasm. Functionally, catalyzes the GTP-dependent ribosomal translocation step during translation elongation. During this step, the ribosome changes from the pre-translocational (PRE) to the post-translocational (POST) state as the newly formed A-site-bound peptidyl-tRNA and P-site-bound deacylated tRNA move to the P and E sites, respectively. Catalyzes the coordinated movement of the two tRNA molecules, the mRNA and conformational changes in the ribosome. The chain is Elongation factor G from Buchnera aphidicola subsp. Baizongia pistaciae (strain Bp).